A 315-amino-acid polypeptide reads, in one-letter code: DNA-directed RNA polymerase subunit alpha (315 aa).

The interval 1–228 (MLEIEKPKIE…EHFKLFMTLT (228 aa)) is alpha N-terminal domain (alpha-NTD). Residues 245–315 (KEKVLEMTIE…LELGLKQSEE (71 aa)) form an alpha C-terminal domain (alpha-CTD) region.

It belongs to the RNA polymerase alpha chain family. Homodimer. The RNAP catalytic core consists of 2 alpha, 1 beta, 1 beta' and 1 omega subunit. When a sigma factor is associated with the core the holoenzyme is formed, which can initiate transcription.

It carries out the reaction RNA(n) + a ribonucleoside 5'-triphosphate = RNA(n+1) + diphosphate. Its function is as follows. DNA-dependent RNA polymerase catalyzes the transcription of DNA into RNA using the four ribonucleoside triphosphates as substrates. In Clostridium tetani (strain Massachusetts / E88), this protein is DNA-directed RNA polymerase subunit alpha.